We begin with the raw amino-acid sequence, 45 residues long: Large ribosomal subunit protein bL36 (45 aa).

Belongs to the bacterial ribosomal protein bL36 family.

The protein is Large ribosomal subunit protein bL36 of Psychrobacter sp. (strain PRwf-1).